A 406-amino-acid polypeptide reads, in one-letter code: Arginine biosynthesis bifunctional protein ArgJ (406 aa).

Substrate contacts are provided by Thr-156, Lys-182, Thr-193, Glu-279, Asn-401, and Thr-406. The Nucleophile role is filled by Thr-193.

It belongs to the ArgJ family. Heterotetramer of two alpha and two beta chains.

The protein localises to the cytoplasm. The catalysed reaction is N(2)-acetyl-L-ornithine + L-glutamate = N-acetyl-L-glutamate + L-ornithine. The enzyme catalyses L-glutamate + acetyl-CoA = N-acetyl-L-glutamate + CoA + H(+). It functions in the pathway amino-acid biosynthesis; L-arginine biosynthesis; L-ornithine and N-acetyl-L-glutamate from L-glutamate and N(2)-acetyl-L-ornithine (cyclic): step 1/1. Its pathway is amino-acid biosynthesis; L-arginine biosynthesis; N(2)-acetyl-L-ornithine from L-glutamate: step 1/4. Its function is as follows. Catalyzes two activities which are involved in the cyclic version of arginine biosynthesis: the synthesis of N-acetylglutamate from glutamate and acetyl-CoA as the acetyl donor, and of ornithine by transacetylation between N(2)-acetylornithine and glutamate. This Bacillus licheniformis (strain ATCC 14580 / DSM 13 / JCM 2505 / CCUG 7422 / NBRC 12200 / NCIMB 9375 / NCTC 10341 / NRRL NRS-1264 / Gibson 46) protein is Arginine biosynthesis bifunctional protein ArgJ.